A 1658-amino-acid chain; its full sequence is Silent chromatin protein ESC1 (1658 aa).

A compositionally biased stretch (basic and acidic residues) spans 36 to 54 (DSKMKDQHGYSRVHNDKYR). Disordered regions lie at residues 36-76 (DSKM…SSHI) and 156-499 (TSFQ…LENE). Acidic residues-rich tracts occupy residues 205–214 (LENDEYELSE) and 245–254 (SNDEYAEEEG). The span at 262–286 (GQEQANVENATQISSSDSSEGQNYS) shows a compositional bias: polar residues. Acidic residues predominate over residues 289-305 (VEMELEDDIDVESDAEK). Basic and acidic residues predominate over residues 335-352 (VIEKYESDEHKVHQRYSE). A compositionally biased stretch (acidic residues) spans 365–375 (VDDESEDEESQ). Residues 386-397 (VYHHNEHELDDK) show a composition bias toward basic and acidic residues. Residues 398 to 407 (ELIEDIESSD) show a composition bias toward acidic residues. Over residues 408 to 417 (SESQSAQESE) the composition is skewed to low complexity. Basic and acidic residues-rich tracts occupy residues 425–435 (EYKMKNEKSTS), 442–461 (SESR…KVEQ), and 471–482 (DDIIRSSLDKNF). Phosphothreonine is present on threonine 500. A Phosphoserine modification is found at serine 532. Disordered stretches follow at residues 550–584 (SRNS…DESE) and 589–608 (LKDF…GDLS). Polar residues predominate over residues 568–577 (GHSNGSNLSG). Residues serine 579, serine 583, serine 608, and serine 662 each carry the phosphoserine modification. 3 disordered regions span residues 770-819 (SKET…EDNT), 863-964 (EMSS…VKGT), and 1082-1115 (ENNT…GSAK). The span at 800–812 (QSKNFPGVANSTD) shows a compositional bias: polar residues. Phosphoserine is present on residues serine 865 and serine 866. The segment covering 869 to 878 (ECVKQNDDGS) has biased composition (basic and acidic residues). Positions 879–905 (KTQISFSTDSPDNFQESNDNTEFSSTK) are enriched in polar residues. Phosphoserine is present on residues serine 888 and serine 911. Over residues 918–931 (SLKKELTKAEVVDK) the composition is skewed to basic and acidic residues. Residues 932 to 956 (LDEEESEDSYEQDYADPEPGNDEGS) are compositionally biased toward acidic residues. A phosphoserine mark is found at serine 937, serine 1092, serine 1096, serine 1098, serine 1166, serine 1176, and serine 1178. A compositionally biased stretch (polar residues) spans 1082 to 1096 (ENNTNMHDQVSQACS). Basic and acidic residues predominate over residues 1097-1115 (DSDRDQDSTAEKNVEGSAK). Over residues 1197 to 1207 (STDASVNMKSV) the composition is skewed to polar residues. Residues 1197 to 1216 (STDASVNMKSVSSKERDSDE) are disordered. Phosphoserine is present on residues serine 1214 and serine 1254. Over residues 1261–1272 (VKDKENLHKSEE) the composition is skewed to basic and acidic residues. The segment at 1261-1315 (VKDKENLHKSEEPLVEGLQSEQHFEKKDHSENEEEFDTIYGDITSANIHSNAPDD) is disordered. Serine 1290, serine 1326, and serine 1332 each carry phosphoserine. 2 disordered regions span residues 1334–1482 (RLIE…TSPE) and 1503–1658 (PATT…SVDK). Over residues 1335 to 1366 (LIEDSRRGKNQEESDEVNTSRERDLTFEKSVN) the composition is skewed to basic and acidic residues. 4 positions are modified to phosphoserine: serine 1403, serine 1409, serine 1450, and serine 1454. Positions 1407 to 1423 (LNSEPEEAELYELEIEG) are enriched in acidic residues. Residues 1463-1479 (YPYSNSENITAEKSAPT) are compositionally biased toward polar residues. Residues 1507–1537 (LEKHDKTNVTSVLDDRSEHLSSHDVDNEPHD) are compositionally biased toward basic and acidic residues. Serine 1539 bears the Phosphoserine mark. 2 stretches are compositionally biased toward basic and acidic residues: residues 1550-1564 (PEHQ…VEVK) and 1575-1591 (VLEE…DKSS). 2 positions are modified to phosphoserine: serine 1590 and serine 1591. A compositionally biased stretch (basic residues) spans 1607–1626 (TKAKKKSRKRNYNSRRRKRK). Polar residues predominate over residues 1648-1658 (RGQNTHPSVDK).

Interacts with SIR4.

Its subcellular location is the nucleus. Its function is as follows. Involved in the clustering of telomeres at the nuclear periphery, forming discrete subcompartments that accumulate a complex of histone-binding silencing factors like SIR4. Required for SIR4-mediated anchoring and partitioning of plasmids. This is Silent chromatin protein ESC1 (ESC1) from Saccharomyces cerevisiae (strain ATCC 204508 / S288c) (Baker's yeast).